The sequence spans 108 residues: UPF0060 membrane protein YnfA (108 aa).

The Periplasmic portion of the chain corresponds to 1-5 (MLKTT). The helical transmembrane segment at 6 to 26 (LLFFVTALCEIIGCFLPWLWL) threads the bilayer. At 27–30 (KRGA) the chain is on the cytoplasmic side. Residues 31 to 51 (SMWWLLPAAASLALFVWLLTL) form a helical membrane-spanning segment. Over 52 to 60 (HPAASGRVY) the chain is Periplasmic. A helical membrane pass occupies residues 61–81 (AAYGGVYVCTALLWLRVVDGV). The Cytoplasmic portion of the chain corresponds to 82–84 (RLT). A helical transmembrane segment spans residues 85–105 (VYDWCGALIALCGMLIIVVGW). The Periplasmic portion of the chain corresponds to 106 to 108 (GRT).

Belongs to the UPF0060 family.

It localises to the cell inner membrane. The sequence is that of UPF0060 membrane protein YnfA from Salmonella schwarzengrund (strain CVM19633).